The chain runs to 926 residues: MEVLDATGLAERLRWEDNDYWLHLEAETPFDKYPAKQHARRVQAKLGIEDGLIYLPGQPARNNEDSDMPAPFRQRRYFYYMSGCDEPDCHLMYDIRRDVLTLFIPRIKPERVIWNGRGSTPAEALAKYDIDQVHHSQDLTYIIQNWAFKHQHTSIYILHPSSRIPGCDNLMPRIDSHSLQPAISLCRMIKDDHEIKRIRKANDISSQAHREVLANIHKYKNEAQVEGLFMDVCISQQAKQQAYDPIAASGPNAGTLHYDANNEDLAGRQLMCLDAGCEYELYASDITRTFPLSASWPSKEAENIYNLVQRMQETCIERLEPGVRYLDLHIMAHQIAIDGLLRLGILCNGTREEIYKAGTSRAFFPHGLGHHIGLEVHDVGQAELMSVRRGKPVYQQAPSLYPENFHDPVYDSETCHAPTDPQSSHLEEGMVVTVEPGIYFSVYALQHFYLPSPIHSKFINLEVLERYLPVGGVRIEDDLLITANGHENLTTAPKGEAMLDIIRQGNPGTTEILNPSPTPPRRMRSENRTPRLRAPGISKKTLQPLLTPLARAATLPTELRQQDDIDFEPIVGPSLFSGFSRAMTTEEKIQQWKQKRDSVPTAPSRPTKAKNLSPVCGENTANVQHVYMSTVSDLSSLSQSSVGSGSTSMCKNCGILVQTLDRLRQNLSSSTQTSPKPMTVPTFESRQKSHTVEEKHREMVCTDSLLDKVSIGQSNRAIGPEERRRKAQSDHHHHSRLKAATGEVKSRFSTRYTPAGVPPLMPSHDQYSITRRPNPERMQPVADTPIVPPRHLTYMTSTPQQSTENPALADLGLPRASAEIAAIRATKQAGQEKLDTQRTTLDAFQDEGQRLVIRSRHRLIPQTSMPVLMSQNPYHHHSNRSHGREGNNATNKRSMIDSQPAERRTRPERPERPARDYVPGDEFLTR.

Asp-274, Asp-285, Glu-435, and Glu-476 together coordinate Mn(2+). 5 disordered regions span residues 505–538, 595–615, 668–696, 711–741, and 865–926; these read GNPGTTEILNPSPTPPRRMRSENRTPRLRAPGIS, KRDSVPTAPSRPTKAKNLSPV, SSSTQTSPKPMTVPTFESRQKSHTVEEKH, IGQSNRAIGPEERRRKAQSDHHHHSRLKAAT, and MPVL…FLTR. Residues 506–515 show a composition bias toward polar residues; sequence NPGTTEILNP. 2 stretches are compositionally biased toward basic and acidic residues: residues 685-696 and 719-730; these read SRQKSHTVEEKH and GPEERRRKAQSD. Residues 887-897 are compositionally biased toward polar residues; it reads NNATNKRSMID. Basic and acidic residues predominate over residues 900-915; the sequence is PAERRTRPERPERPAR.

Belongs to the peptidase M24B family. Mn(2+) is required as a cofactor.

The catalysed reaction is Release of any N-terminal amino acid, including proline, that is linked to proline, even from a dipeptide or tripeptide.. Functionally, catalyzes the removal of a penultimate prolyl residue from the N-termini of peptides. This is Probable Xaa-Pro aminopeptidase PTT_10145 from Pyrenophora teres f. teres (strain 0-1) (Barley net blotch fungus).